The following is a 514-amino-acid chain: Monocarboxylate transporter 10 (514 aa).

Positions 1–64 (MVPSQEEPAA…TGNQEPPEPP (64 aa)) are disordered. Residues 1 to 65 (MVPSQEEPAA…GNQEPPEPPE (65 aa)) lie on the Cytoplasmic side of the membrane. A helical membrane pass occupies residues 66–86 (GGWGWLVMLAAMWCNGSVFGI). Over 87 to 113 (QNAYGVLFVSMLETFGAKDDDNMAFKA) the chain is Extracellular. The chain crosses the membrane as a helical span at residues 114–134 (AWVGSLSMGMIFFCCPIVSVF). The Cytoplasmic segment spans residues 135–143 (TDMFGCRRT). Residues 144 to 164 (AVLGAAVGFVGLMSSSFVSSI) form a helical membrane-spanning segment. The Extracellular portion of the chain corresponds to 165-170 (EPLYFT). The helical transmembrane segment at 171–191 (YGVVFACGCSFAYQPSLVILG) threads the bilayer. Residues 192–199 (HYFKKRLG) are Cytoplasmic-facing. Residues 200-220 (LVNGIVTAGSSVFTILLPLLL) form a helical membrane-spanning segment. Over 221–227 (GNLTSTV) the chain is Extracellular. The chain crosses the membrane as a helical span at residues 228-248 (GLCYTLRILCIFMFVLFLAGF). The Cytoplasmic segment spans residues 249 to 290 (TYRPLVPSSKEKESEDSRSSFFSRRKLSPPKKIFNFALFKET). Position 262 is a phosphoserine (S262). The helical transmembrane segment at 291–311 (AYAVWAAGIPLALFGYFVPYV) threads the bilayer. Residues 312–328 (HLMNHVKERFKDVNNKE) lie on the Extracellular side of the membrane. The helical transmembrane segment at 329–349 (VLFMCIGVTSGVGRLLFGRIA) threads the bilayer. Position 350 (D350) is a topological domain, cytoplasmic. The chain crosses the membrane as a helical span at residues 351–371 (YLPGVKKVYLQVLSFFFIGLT). The Extracellular segment spans residues 372 to 395 (SMMIPLCSVFGALIALCLIMGLFD). Residues 396-416 (GCFISIMAPIAFELVGPQDAS) form a helical membrane-spanning segment. Residues 417–418 (QA) are Cytoplasmic-facing. A helical membrane pass occupies residues 419–439 (IGFLLGFMSIPMTVGPPVAGL). Topologically, residues 440–450 (LHDKLGSYDLA) are extracellular. A helical membrane pass occupies residues 451–471 (FYLAGIPPFIGGAVLCLIPWI). Over 472-514 (HSKKQREISKNTGGEKMEKMLANQSSLLSSSSGIFKKESDSII) the chain is Cytoplasmic. Residues S497, S500, S502, and S503 each carry the phosphoserine modification.

The protein belongs to the major facilitator superfamily. Monocarboxylate porter (TC 2.A.1.13) family. Not N-glycosylated. In terms of tissue distribution, strongly expressed in intestine, placenta and liver. In small intestine is detected in the basolateral membrane (at protein level).

It localises to the cell membrane. Its subcellular location is the basolateral cell membrane. The catalysed reaction is L-tryptophan(in) = L-tryptophan(out). It catalyses the reaction L-tyrosine(in) = L-tyrosine(out). The enzyme catalyses L-phenylalanine(in) = L-phenylalanine(out). It carries out the reaction 3,3',5-triiodo-L-thyronine(out) = 3,3',5-triiodo-L-thyronine(in). The catalysed reaction is L-thyroxine(out) = L-thyroxine(in). Sodium- and proton-independent thyroid hormones and aromatic acids transporter. Mediates both uptake and efflux of 3,5,3'-triiodothyronine (T3) and 3,5,3',5'-tetraiodothyronine (T4) with high affinity, suggesting a role in the homeostasis of thyroid hormone levels. Responsible for low affinity bidirectional transport of the aromatic amino acids, such as phenylalanine, tyrosine, tryptophan and L-3,4-dihydroxyphenylalanine (L-dopa). Plays an important role in homeostasis of aromatic amino acids. The protein is Monocarboxylate transporter 10 (Slc16a10) of Rattus norvegicus (Rat).